The chain runs to 313 residues: Ribosomal protein L11 methyltransferase (313 aa).

Residues threonine 164, glycine 185, aspartate 207, and asparagine 249 each contribute to the S-adenosyl-L-methionine site.

This sequence belongs to the methyltransferase superfamily. PrmA family.

Its subcellular location is the cytoplasm. The enzyme catalyses L-lysyl-[protein] + 3 S-adenosyl-L-methionine = N(6),N(6),N(6)-trimethyl-L-lysyl-[protein] + 3 S-adenosyl-L-homocysteine + 3 H(+). Its function is as follows. Methylates ribosomal protein L11. In Clostridium perfringens (strain ATCC 13124 / DSM 756 / JCM 1290 / NCIMB 6125 / NCTC 8237 / Type A), this protein is Ribosomal protein L11 methyltransferase.